Consider the following 262-residue polypeptide: 5-methyltetrahydrofolate:corrinoid/iron-sulfur protein co-methyltransferase (262 aa).

The region spanning methionine 1 to leucine 246 is the Pterin-binding domain. (6S)-5-methyl-5,6,7,8-tetrahydrofolate is bound by residues asparagine 96 and aspartate 160. Position 184 (lysine 184) interacts with Ca(2+). 3 residues coordinate (6S)-5-methyl-5,6,7,8-tetrahydrofolate: asparagine 199, glutamine 202, and arginine 207. Position 202–203 (glutamine 202–asparagine 203) interacts with methylcob(III)alamin. The Ca(2+) site is built by glycine 222 and aspartate 224.

It belongs to the vitamin-B12 dependent methionine synthase family. As to quaternary structure, heterohexamer composed of 2 subunits of AcsC, 2 subunits of AcsD and 2 subunits of AcsE. It depends on Ca(2+) as a cofactor.

It carries out the reaction methyl-Co(III)-[corrinoid Fe-S protein] + (6S)-5,6,7,8-tetrahydrofolate = Co(I)-[corrinoid Fe-S protein] + (6S)-5-methyl-5,6,7,8-tetrahydrofolate + H(+). Its function is as follows. Methyltransferase that mediates the transfer of a N5-methyl group of (6S)-methyltetrahydrofolate to the 5-methoxybenzimidazolylcobamide cofactor of a corrinoid/Fe-S protein (AcsC/AcsD) in the anaerobic acetyl-CoA pathway (Wood-Ljungdahl pathway) of carbon monoxide and carbon dioxide fixation. This is 5-methyltetrahydrofolate:corrinoid/iron-sulfur protein co-methyltransferase (acsE) from Moorella thermoacetica (Clostridium thermoaceticum).